Reading from the N-terminus, the 295-residue chain is Secreted frizzled-related protein 2 (295 aa).

The first 24 residues, 1–24, serve as a signal peptide directing secretion; the sequence is MPRGPASLLLLVLASHCCLGSARG. In terms of domain architecture, FZ spans 35-155; that stretch reads YKRSNCKPIP…PQDNDLCIPL (121 aa). Cystine bridges form between C40–C103, C50–C96, C87–C125, C114–C152, C118–C142, C172–C245, C175–C247, and C190–C295. Residues 172-295 form the NTR domain; sequence CEACKTKNED…ISRSIRKLQC (124 aa).

Belongs to the secreted frizzled-related protein (sFRP) family. In terms of tissue distribution, highly expressed in the eye. Weaker expression in heart and lung.

Its subcellular location is the secreted. Soluble frizzled-related proteins (sFRPS) function as modulators of Wnt signaling through direct interaction with Wnts. They have a role in regulating cell growth and differentiation in specific cell types. SFRP2 may be important for eye retinal development and for myogenesis. In Mus musculus (Mouse), this protein is Secreted frizzled-related protein 2.